A 58-amino-acid polypeptide reads, in one-letter code: Large ribosomal subunit protein uL30 (58 aa).

The protein belongs to the universal ribosomal protein uL30 family. Part of the 50S ribosomal subunit.

The chain is Large ribosomal subunit protein uL30 from Acinetobacter baumannii (strain AB307-0294).